Reading from the N-terminus, the 303-residue chain is Probable 5-dehydro-4-deoxyglucarate dehydratase (303 aa).

This sequence belongs to the DapA family.

The catalysed reaction is 5-dehydro-4-deoxy-D-glucarate + H(+) = 2,5-dioxopentanoate + CO2 + H2O. The protein operates within carbohydrate acid metabolism; D-glucarate degradation; 2,5-dioxopentanoate from D-glucarate: step 2/2. The sequence is that of Probable 5-dehydro-4-deoxyglucarate dehydratase from Leptothrix cholodnii (strain ATCC 51168 / LMG 8142 / SP-6) (Leptothrix discophora (strain SP-6)).